Here is an 885-residue protein sequence, read N- to C-terminus: Chitobiase (885 aa).

Positions 1–27 are cleaved as a signal peptide; sequence MNAFKLSALARLTATMGFLGGMGSAMA. 3 disulfide bridges follow: Cys56–Cys66, Cys400–Cys408, and Cys505–Cys578. Glu540 serves as the catalytic Proton donor. Residues 866–885 form a disordered region; that stretch reads EVQVRSVSPDGKRYSRAEKV. A compositionally biased stretch (basic and acidic residues) spans 875-885; it reads DGKRYSRAEKV.

The protein belongs to the glycosyl hydrolase 20 family. Monomer.

The protein localises to the periplasm. It catalyses the reaction Hydrolysis of terminal non-reducing N-acetyl-D-hexosamine residues in N-acetyl-beta-D-hexosaminides.. It participates in glycan degradation; chitin degradation. Functionally, digests the beta-1,4-glycosidic bonds in N-acetylglucosamine (GlcNAc) oligomers (mainly dimers). This chain is Chitobiase (chb), found in Serratia marcescens.